Here is a 237-residue protein sequence, read N- to C-terminus: V-type proton ATPase subunit E (237 aa).

This sequence belongs to the V-ATPase E subunit family. As to quaternary structure, V-ATPase is a heteromultimeric enzyme composed of a peripheral catalytic V1 complex (components A to H) attached to an integral membrane V0 proton pore complex (components: a, c, c', c'' and d).

In terms of biological role, subunit of the peripheral V1 complex of vacuolar ATPase essential for assembly or catalytic function. V-ATPase is responsible for acidifying a variety of intracellular compartments in eukaryotic cells. The sequence is that of V-type proton ATPase subunit E (VATE) from Gossypium hirsutum (Upland cotton).